A 655-amino-acid polypeptide reads, in one-letter code: Protein nipi-3 (655 aa).

The interval 1–35 (MARTKCKTKTVANPRTGVRKTAKDLSEPVRQDAVS) is disordered. The segment covering 21–35 (TAKDLSEPVRQDAVS) has biased composition (basic and acidic residues). The 271-residue stretch at 200-470 (IGIFVIYGTG…NQVNGDFPEI (271 aa)) folds into the Protein kinase domain. Residues 206–214 (YGTGLVTRA) and Lys235 each bind ATP.

This sequence belongs to the protein kinase superfamily. CAMK Ser/Thr protein kinase family. May interact with transcription factor cebp-1 (via N-terminus). Expressed in epidermis, pharynx, intestine, a subset of head neurons and motoneurons.

The protein resides in the nucleus. Functionally, adapter protein that regulates different signaling pathways. Required for larval development and viability. Involved in negatively modulating pmk-1 p38/MAPK signaling. Involved in innate immunity, acting either in a manner dependent upon, or independent of, the pmk-1 or pmk-3 p38/MAPK pathways. Has a protective role in response to infection by the Gram-negative bacterium P.aeruginosa, acting by negatively modulating expression of cebp-1, and regulating the pmk-1 p38/MAPK pathway, leading to activation of transcription factor skn-1. Required to prevent P.aeruginosa toxin ToxA-mediated lethality, probably acting via modulating the effects of translational inhibition caused by the toxin. By regulating the up-regulation in the epidermis of antimicrobial peptides nlp-29 and nlp-31, plays a role in resistance to fungal infection. The protein is Protein nipi-3 of Caenorhabditis elegans.